Reading from the N-terminus, the 871-residue chain is DNA mismatch repair protein MutS 1 (871 aa).

ATP is bound at residue 614–621; that stretch reads GPNMSGKS.

Belongs to the DNA mismatch repair MutS family.

In terms of biological role, this protein is involved in the repair of mismatches in DNA. It is possible that it carries out the mismatch recognition step. This protein has a weak ATPase activity. This is DNA mismatch repair protein MutS 1 from Halobacterium salinarum (strain ATCC 29341 / DSM 671 / R1).